The primary structure comprises 329 residues: Glycerol-3-phosphate dehydrogenase [NAD(P)+] (329 aa).

Residues Ser13, Trp14, His34, and Lys105 each contribute to the NADPH site. Sn-glycerol 3-phosphate is bound by residues Lys105, Gly134, and Ser136. Ala138 provides a ligand contact to NADPH. Residues Lys189, Asp242, Ser252, Arg253, and Asn254 each contribute to the sn-glycerol 3-phosphate site. The active-site Proton acceptor is the Lys189. Arg253 contacts NADPH. Val277 and Glu279 together coordinate NADPH.

This sequence belongs to the NAD-dependent glycerol-3-phosphate dehydrogenase family.

It localises to the cytoplasm. It carries out the reaction sn-glycerol 3-phosphate + NAD(+) = dihydroxyacetone phosphate + NADH + H(+). The enzyme catalyses sn-glycerol 3-phosphate + NADP(+) = dihydroxyacetone phosphate + NADPH + H(+). Its pathway is membrane lipid metabolism; glycerophospholipid metabolism. In terms of biological role, catalyzes the reduction of the glycolytic intermediate dihydroxyacetone phosphate (DHAP) to sn-glycerol 3-phosphate (G3P), the key precursor for phospholipid synthesis. The sequence is that of Glycerol-3-phosphate dehydrogenase [NAD(P)+] from Legionella pneumophila subsp. pneumophila (strain Philadelphia 1 / ATCC 33152 / DSM 7513).